Consider the following 433-residue polypeptide: tRNA-2-methylthio-N(6)-dimethylallyladenosine synthase (433 aa).

Positions 4-119 (KKLFIQTLGC…ITQAIKTPKF (116 aa)) constitute an MTTase N-terminal domain. The [4Fe-4S] cluster site is built by Cys13, Cys50, Cys82, Cys151, Cys155, and Cys158. In terms of domain architecture, Radical SAM core spans 137–370 (RNSIYKSYIN…QNRHSEILDE (234 aa)). Residues 373-433 (KKQENKTFKV…KRMVLYGEII (61 aa)) enclose the TRAM domain.

This sequence belongs to the methylthiotransferase family. MiaB subfamily. As to quaternary structure, monomer. The cofactor is [4Fe-4S] cluster.

Its subcellular location is the cytoplasm. The catalysed reaction is N(6)-dimethylallyladenosine(37) in tRNA + (sulfur carrier)-SH + AH2 + 2 S-adenosyl-L-methionine = 2-methylsulfanyl-N(6)-dimethylallyladenosine(37) in tRNA + (sulfur carrier)-H + 5'-deoxyadenosine + L-methionine + A + S-adenosyl-L-homocysteine + 2 H(+). Its function is as follows. Catalyzes the methylthiolation of N6-(dimethylallyl)adenosine (i(6)A), leading to the formation of 2-methylthio-N6-(dimethylallyl)adenosine (ms(2)i(6)A) at position 37 in tRNAs that read codons beginning with uridine. This Campylobacter jejuni subsp. doylei (strain ATCC BAA-1458 / RM4099 / 269.97) protein is tRNA-2-methylthio-N(6)-dimethylallyladenosine synthase.